The sequence spans 352 residues: Staphylococcal superantigen-like 3 (352 aa).

Residues 1–30 (MKMRTIAKTSLALGLLTTGAITVTTQSVKA) form the signal peptide. A disordered region spans residues 61–165 (ATTQAANTRQ…TIKQAQTDMT (105 aa)). Positions 69–104 (RQERTPKLEKAPNTNEEKTSASKIEKISQPKQEEQK) are enriched in basic and acidic residues. The segment covering 114-141 (PKQEQSQTTTESTTPKTKVTTPPSTNTP) has biased composition (low complexity). Residues 142–164 (QPMQSTKSDTPQSPTIKQAQTDM) show a composition bias toward polar residues. The sialyl Lewis X-binding stretch occupies residues 228–326 (IDVFIVLEDN…VIKMKNGGKY (99 aa)).

This sequence belongs to the staphylococcal/streptococcal toxin family. In terms of assembly, interacts with host TLR2 (via its extracellular domain).

It is found in the secreted. Functionally, secreted protein that plays an essential role in immune innate response inhibition by interacting with and inhibiting host TLR2. In turn, bacteria recognition by immune cells is impaired and cytokine production is inhibited. Mechanistically, by interacting with TLR2, blocks ligand binding and thus inhibits activation. Second, by interacting with an already formed TLR2-lipopeptide complex, prevents TLR heterodimerization and downstream signaling. The interaction with host TLR2 does not involve sialyl Lewis X interactions. This Staphylococcus aureus (strain Newman) protein is Staphylococcal superantigen-like 3.